Consider the following 196-residue polypeptide: MLDCRAVIMLWLLPWVTQGLAVPRSSSPDWAQCQQLSRNLCMLAWNAHAPAGHMNLLREEEDEETKNNVPRIQCEDGCDPQGLKDNSQFCLQRIRQGLAFYKHLLDSDIFKGEPALLPDSPMEQLHTSLLGLSQLLQPEDHPRETQQMPSLSSSQQWQRPLLRSKILRSLQAFLAIAARVFAHGAATLTEPLVPTA.

Positions M1–A21 are cleaved as a signal peptide.

This sequence belongs to the IL-6 superfamily. As to quaternary structure, heterodimer with IL12B; disulfide-linked. The heterodimer is known as interleukin IL-23. Interacts with IL23R; this interaction enables recruitment of IL12RB1. As to expression, secreted by activated dendritic cells (at protein level). Detected in various tissues with higher expression in polarized Th1 cells and activated macrophages.

The protein resides in the secreted. Functionally, associates with IL12B to form the IL-23 interleukin, a heterodimeric cytokine which functions in innate and adaptive immunity. IL-23 may constitute with IL-17 an acute response to infection in peripheral tissues. IL-23 binds to a heterodimeric receptor complex composed of IL12RB1 and IL23R, activates the Jak-Stat signaling cascade, stimulates memory rather than naive T-cells and promotes production of pro-inflammatory cytokines. IL-23 induces autoimmune inflammation and thus may be responsible for autoimmune inflammatory diseases and may be important for tumorigenesis. Its function is as follows. Associates with IL12B to form the pro-inflammatory cytokine IL-23 that plays different roles in innate and adaptive immunity. Released by antigen-presenting cells such as dendritic cells or macrophages, binds to a heterodimeric receptor complex composed of IL12RB1 and IL23R to activate JAK2 and TYK2 which then phosphorylate the receptor to form a docking site leading to the phosphorylation of STAT3 and STAT4. This process leads to activation of several pathways including p38 MAPK or NF-kappa-B and promotes the production of pro-inflammatory cytokines such as interleukin-17A/IL17A. In turn, participates in the early and effective intracellular bacterial clearance. Promotes the expansion and survival of T-helper 17 cells, a CD4-positive helper T-cell subset that produces IL-17, as well as other IL-17-producing cells. In Mus musculus (Mouse), this protein is Interleukin-23 subunit alpha (Il23a).